The chain runs to 205 residues: Heme-binding protein 2 (205 aa).

A disordered region spans residues M1–E39. Position 2 is an N-acetylalanine (A2). A Phosphoserine modification is found at S181.

The protein belongs to the HEBP family. As to quaternary structure, monomer. Interacts with LRPPRC. May interact with BCL2L1; an interaction with BCL2L1 was observed using a peptide, but not with the full-length protein. The full-length protein would have to undergo a major conformation change for the interaction to occur. Interacts with PDCD6. As to expression, detected in placenta.

Its subcellular location is the cytoplasm. It localises to the mitochondrion. Its function is as follows. Can promote mitochondrial permeability transition and facilitate necrotic cell death under different types of stress conditions. The sequence is that of Heme-binding protein 2 (HEBP2) from Homo sapiens (Human).